Consider the following 200-residue polypeptide: Small ribosomal subunit protein uS4 (200 aa).

The S4 RNA-binding domain maps to 94–157 (SRLDNLVFRA…QTSPQVKDAV (64 aa)).

It belongs to the universal ribosomal protein uS4 family. In terms of assembly, part of the 30S ribosomal subunit. Contacts protein S5. The interaction surface between S4 and S5 is involved in control of translational fidelity.

One of the primary rRNA binding proteins, it binds directly to 16S rRNA where it nucleates assembly of the body of the 30S subunit. In terms of biological role, with S5 and S12 plays an important role in translational accuracy. This is Small ribosomal subunit protein uS4 from Metamycoplasma arthritidis (strain 158L3-1) (Mycoplasma arthritidis).